We begin with the raw amino-acid sequence, 129 residues long: Small ribosomal subunit protein uS11 (129 aa).

It belongs to the universal ribosomal protein uS11 family. As to quaternary structure, part of the 30S ribosomal subunit. Interacts with proteins S7 and S18. Binds to IF-3.

Functionally, located on the platform of the 30S subunit, it bridges several disparate RNA helices of the 16S rRNA. Forms part of the Shine-Dalgarno cleft in the 70S ribosome. The protein is Small ribosomal subunit protein uS11 of Dechloromonas aromatica (strain RCB).